The chain runs to 67 residues: Small ribosomal subunit protein eS31 (67 aa).

Zn(2+)-binding residues include Cys31, Cys34, Cys49, and Cys52. A C4-type zinc finger spans residues Cys31 to Cys52.

It belongs to the eukaryotic ribosomal protein eS31 family. As to quaternary structure, part of the 30S ribosomal subunit. It depends on Zn(2+) as a cofactor.

This Methanococcus maripaludis (strain C6 / ATCC BAA-1332) protein is Small ribosomal subunit protein eS31.